A 907-amino-acid polypeptide reads, in one-letter code: Eukaryotic translation initiation factor 4 gamma 2 (907 aa).

Position 1 is an N-acetylmethionine (Met-1). Positions 1-71 (MESAIAEGGA…SAANNSANEK (71 aa)) are disordered. Ser-11 carries the post-translational modification Phosphoserine. An MIF4G domain is found at 78–308 (FRKVRGILNK…QDTVELREHH (231 aa)). Thr-89 bears the Phosphothreonine mark. Position 360 is an omega-N-methylarginine (Arg-360). At Ser-395 the chain carries Phosphoserine. Position 431 is an N6-methyllysine (Lys-431). At Ser-443 the chain carries Phosphoserine. The tract at residues 498–541 (PPSAQPPRTQTPPLGQTPQLGLKTNPPLIQEKPAKTSKKPPPSK) is disordered. Over residues 503–516 (PPRTQTPPLGQTPQ) the composition is skewed to polar residues. Arg-505 is modified (omega-N-methylarginine). Thr-508 and Thr-514 each carry phosphothreonine. The MI domain maps to 543–666 (ELLKLTETVV…SISELAQPLE (124 aa)). Lys-575 participates in a covalent cross-link: Glycyl lysine isopeptide (Lys-Gly) (interchain with G-Cter in SUMO2). One can recognise a W2 domain in the interval 720-904 (EGKGLSFLFP…ETAEEEESEE (185 aa)). Ser-902 is subject to Phosphoserine.

This sequence belongs to the eukaryotic initiation factor 4G family. As to quaternary structure, interacts with the serine/threonine protein kinases MKNK1 and MKNK2. Binds EIF4A and EIF3. Interacts with MIF4GD. Interacts with DAZAP2. Phosphorylation; hyperphosphorylated during mitosis.

In terms of biological role, appears to play a role in the switch from cap-dependent to IRES-mediated translation during mitosis, apoptosis and viral infection. Cleaved by some caspases and viral proteases. This is Eukaryotic translation initiation factor 4 gamma 2 from Oryctolagus cuniculus (Rabbit).